The primary structure comprises 261 residues: Cytochrome c oxidase subunit 3 (261 aa).

Over 1 to 15 (MTHQTHAYHMVNPSP) the chain is Mitochondrial matrix. A helical membrane pass occupies residues 16 to 34 (WPLTGALSALLMTSGLAMW). The Mitochondrial intermembrane segment spans residues 35-40 (FHFNST). Residues 41–66 (ILLMIGLTTNTLTMYQWWRDVIREST) form a helical membrane-spanning segment. Topologically, residues 67-72 (FQGHHT) are mitochondrial matrix. The chain crosses the membrane as a helical span at residues 73-105 (PTVQKGLRYGMILFIISEVLFFTGFFWAFYHSS). Topologically, residues 106-128 (LAPTPELGGCWPPTGIHPLNPLE) are mitochondrial intermembrane. A helical transmembrane segment spans residues 129 to 152 (VPLLNTSVLLASGVSITWAHHSLM). At 153–155 (EGN) the chain is on the mitochondrial matrix side. A helical transmembrane segment spans residues 156-183 (RYPMLQALFITIALGVYFTLLQASEYYE). The Mitochondrial intermembrane segment spans residues 184–190 (APFTISD). A helical transmembrane segment spans residues 191–223 (GIYGSTFFVATGFHGLHVIIGSTFLIVCFFRQL). Topologically, residues 224 to 232 (KFHFTSNHH) are mitochondrial matrix. The helical transmembrane segment at 233–256 (FGFEAAAWYWHFVDVVWLFLYVSI) threads the bilayer. Topologically, residues 257–261 (YWWGS) are mitochondrial intermembrane.

The protein belongs to the cytochrome c oxidase subunit 3 family. In terms of assembly, component of the cytochrome c oxidase (complex IV, CIV), a multisubunit enzyme composed of 14 subunits. The complex is composed of a catalytic core of 3 subunits MT-CO1, MT-CO2 and MT-CO3, encoded in the mitochondrial DNA, and 11 supernumerary subunits COX4I, COX5A, COX5B, COX6A, COX6B, COX6C, COX7A, COX7B, COX7C, COX8 and NDUFA4, which are encoded in the nuclear genome. The complex exists as a monomer or a dimer and forms supercomplexes (SCs) in the inner mitochondrial membrane with NADH-ubiquinone oxidoreductase (complex I, CI) and ubiquinol-cytochrome c oxidoreductase (cytochrome b-c1 complex, complex III, CIII), resulting in different assemblies (supercomplex SCI(1)III(2)IV(1) and megacomplex MCI(2)III(2)IV(2)).

Its subcellular location is the mitochondrion inner membrane. It carries out the reaction 4 Fe(II)-[cytochrome c] + O2 + 8 H(+)(in) = 4 Fe(III)-[cytochrome c] + 2 H2O + 4 H(+)(out). Component of the cytochrome c oxidase, the last enzyme in the mitochondrial electron transport chain which drives oxidative phosphorylation. The respiratory chain contains 3 multisubunit complexes succinate dehydrogenase (complex II, CII), ubiquinol-cytochrome c oxidoreductase (cytochrome b-c1 complex, complex III, CIII) and cytochrome c oxidase (complex IV, CIV), that cooperate to transfer electrons derived from NADH and succinate to molecular oxygen, creating an electrochemical gradient over the inner membrane that drives transmembrane transport and the ATP synthase. Cytochrome c oxidase is the component of the respiratory chain that catalyzes the reduction of oxygen to water. Electrons originating from reduced cytochrome c in the intermembrane space (IMS) are transferred via the dinuclear copper A center (CU(A)) of subunit 2 and heme A of subunit 1 to the active site in subunit 1, a binuclear center (BNC) formed by heme A3 and copper B (CU(B)). The BNC reduces molecular oxygen to 2 water molecules using 4 electrons from cytochrome c in the IMS and 4 protons from the mitochondrial matrix. The polypeptide is Cytochrome c oxidase subunit 3 (MT-CO3) (Raphicerus melanotis (Cape grysbok)).